Here is a 463-residue protein sequence, read N- to C-terminus: Ribosomal protein uS12 methylthiotransferase RimO (463 aa).

One can recognise an MTTase N-terminal domain in the interval P15 to P130. [4Fe-4S] cluster contacts are provided by C24, C60, C89, C161, C165, and C168. Positions L147–A392 constitute a Radical SAM core domain. The TRAM domain occupies A395–V463.

This sequence belongs to the methylthiotransferase family. RimO subfamily. The cofactor is [4Fe-4S] cluster.

The protein localises to the cytoplasm. It catalyses the reaction L-aspartate(89)-[ribosomal protein uS12]-hydrogen + (sulfur carrier)-SH + AH2 + 2 S-adenosyl-L-methionine = 3-methylsulfanyl-L-aspartate(89)-[ribosomal protein uS12]-hydrogen + (sulfur carrier)-H + 5'-deoxyadenosine + L-methionine + A + S-adenosyl-L-homocysteine + 2 H(+). Catalyzes the methylthiolation of an aspartic acid residue of ribosomal protein uS12. In Burkholderia pseudomallei (strain 668), this protein is Ribosomal protein uS12 methylthiotransferase RimO.